The chain runs to 124 residues: Ragulator complex protein LAMTOR3 (124 aa).

The interval 57 to 70 (TDQGSKLGLSKNKS) is required for interaction with LAMTOR2.

This sequence belongs to the LAMTOR3 family. Part of the Ragulator complex composed of LAMTOR1, LAMTOR2, LAMTOR3, LAMTOR4 and LAMTOR5. LAMTOR4 and LAMTOR5 form a heterodimer that interacts, through LAMTOR1, with a LAMTOR2, LAMTOR3 heterodimer. The Ragulator complex interacts with both the mTORC1 complex and heterodimers constituted of the Rag GTPases RagA/RRAGA, RagB/RRAGB, RagC/RRAGC and RagD/RRAGD; regulated by amino acid availability. The Ragulator complex interacts with SLC38A9; the probable amino acid sensor. Interacts with LAMTOR1 and LAMTOR2; the interaction is direct. Component of the lysosomal folliculin complex (LFC), composed of FLCN, FNIP1 (or FNIP2), RagA/RRAGA or RagB/RRAGB GDP-bound, RagC/RRAGC or RagD/RRAGD GTP-bound, and Ragulator. Interacts with MAP2K1/MEK1 and MAPK2. Interacts with MORG1.

Its subcellular location is the late endosome membrane. Its function is as follows. As part of the Ragulator complex it is involved in amino acid sensing and activation of mTORC1, a signaling complex promoting cell growth in response to growth factors, energy levels, and amino acids. Activated by amino acids through a mechanism involving the lysosomal V-ATPase, the Ragulator plays a dual role for the small GTPases Rag (RagA/RRAGA, RagB/RRAGB, RagC/RRAGC and/or RagD/RRAGD): it (1) acts as a guanine nucleotide exchange factor (GEF), activating the small GTPases Rag and (2) mediates recruitment of Rag GTPases to the lysosome membrane. Activated Ragulator and Rag GTPases function as a scaffold recruiting mTORC1 to lysosomes where it is in turn activated. Adapter protein that enhances the efficiency of the MAP kinase cascade facilitating the activation of MAPK2. The polypeptide is Ragulator complex protein LAMTOR3 (Lamtor3) (Mus musculus (Mouse)).